The sequence spans 131 residues: uncharacterized protein (131 aa).

This is an uncharacterized protein from Archaeoglobus fulgidus (strain ATCC 49558 / DSM 4304 / JCM 9628 / NBRC 100126 / VC-16).